Consider the following 65-residue polypeptide: Large ribosomal subunit protein bL35 (65 aa).

The protein belongs to the bacterial ribosomal protein bL35 family.

This is Large ribosomal subunit protein bL35 from Buchnera aphidicola subsp. Acyrthosiphon pisum (strain 5A).